Consider the following 250-residue polypeptide: 3-deoxy-manno-octulosonate cytidylyltransferase (250 aa).

This sequence belongs to the KdsB family.

The protein resides in the cytoplasm. The catalysed reaction is 3-deoxy-alpha-D-manno-oct-2-ulosonate + CTP = CMP-3-deoxy-beta-D-manno-octulosonate + diphosphate. The protein operates within nucleotide-sugar biosynthesis; CMP-3-deoxy-D-manno-octulosonate biosynthesis; CMP-3-deoxy-D-manno-octulosonate from 3-deoxy-D-manno-octulosonate and CTP: step 1/1. It participates in bacterial outer membrane biogenesis; lipopolysaccharide biosynthesis. Its function is as follows. Activates KDO (a required 8-carbon sugar) for incorporation into bacterial lipopolysaccharide in Gram-negative bacteria. In Legionella pneumophila (strain Lens), this protein is 3-deoxy-manno-octulosonate cytidylyltransferase.